A 73-amino-acid chain; its full sequence is Protein SlyX homolog (73 aa).

It belongs to the SlyX family.

In Histophilus somni (strain 129Pt) (Haemophilus somnus), this protein is Protein SlyX homolog.